Here is a 318-residue protein sequence, read N- to C-terminus: Ribose-phosphate pyrophosphokinase 2 (318 aa).

An ATP-binding site is contributed by 96–101 (RQDKKD). Mg(2+) is bound by residues Asp-128, His-130, Asp-139, and Asp-143. His-130 contacts ATP. The tract at residues 212–227 (KDRVAILVDDMADTCG) is binding of phosphoribosylpyrophosphate.

This sequence belongs to the ribose-phosphate pyrophosphokinase family. As to quaternary structure, homodimer. The active form is probably a hexamer composed of 3 homodimers. It depends on Mg(2+) as a cofactor.

The catalysed reaction is D-ribose 5-phosphate + ATP = 5-phospho-alpha-D-ribose 1-diphosphate + AMP + H(+). It functions in the pathway metabolic intermediate biosynthesis; 5-phospho-alpha-D-ribose 1-diphosphate biosynthesis; 5-phospho-alpha-D-ribose 1-diphosphate from D-ribose 5-phosphate (route I): step 1/1. Its activity is regulated as follows. Activated by magnesium and inorganic phosphate. Competitively or non-competitively inhibited by ADP, 2,3-bisphosphoglyceride or GDP. Catalyzes the synthesis of phosphoribosylpyrophosphate (PRPP) that is essential for nucleotide synthesis. The sequence is that of Ribose-phosphate pyrophosphokinase 2 (Prps2) from Mus musculus (Mouse).